The primary structure comprises 442 residues: GTPase Der (442 aa).

2 consecutive EngA-type G domains span residues 2–167 (RTIA…PIQN) and 175–351 (FKFC…EQAM). GTP contacts are provided by residues 8 to 15 (GKPNVGKS), 55 to 59 (DTGGI), 119 to 122 (NKVE), 181 to 188 (GRPNVGKS), 228 to 232 (DTAGV), and 293 to 296 (NKWD). The region spanning 352–436 (RKVATSLLND…PITLYWQDKN (85 aa)) is the KH-like domain.

This sequence belongs to the TRAFAC class TrmE-Era-EngA-EngB-Septin-like GTPase superfamily. EngA (Der) GTPase family. In terms of assembly, associates with the 50S ribosomal subunit.

GTPase that plays an essential role in the late steps of ribosome biogenesis. This is GTPase Der from Ureaplasma urealyticum serovar 10 (strain ATCC 33699 / Western).